The chain runs to 268 residues: Hydroxyethylthiazole kinase (268 aa).

M46 serves as a coordination point for substrate. ATP-binding residues include R122 and T168. Residue G195 coordinates substrate.

Belongs to the Thz kinase family. Requires Mg(2+) as cofactor.

It catalyses the reaction 5-(2-hydroxyethyl)-4-methylthiazole + ATP = 4-methyl-5-(2-phosphooxyethyl)-thiazole + ADP + H(+). The protein operates within cofactor biosynthesis; thiamine diphosphate biosynthesis; 4-methyl-5-(2-phosphoethyl)-thiazole from 5-(2-hydroxyethyl)-4-methylthiazole: step 1/1. Functionally, catalyzes the phosphorylation of the hydroxyl group of 4-methyl-5-beta-hydroxyethylthiazole (THZ). This Desulfatibacillum aliphaticivorans protein is Hydroxyethylthiazole kinase.